The following is a 534-amino-acid chain: Melanopsin-B (534 aa).

The Extracellular segment spans residues 1-32; the sequence is MDLGKTVEYGTHRQDAIAQIDVPDQVLYTIGS. Residues 33–53 traverse the membrane as a helical segment; sequence FILIIGSVGIIGNMLVLYAFY. The Cytoplasmic segment spans residues 54–64; that stretch reads RNKKLRTAPNY. The helical transmembrane segment at 65–85 threads the bilayer; it reads FIINLAISDFLMSATQAPVCF. The Extracellular segment spans residues 86–102; it reads LSSLHREWILGDIGCNV. Cysteines 100 and 178 form a disulfide. The chain crosses the membrane as a helical span at residues 103–123; that stretch reads YAFCGALFGITSMMTLLAISI. The Cytoplasmic segment spans residues 124 to 146; sequence NRYIVITKPLQSIQWSSKKRTSQ. The chain crosses the membrane as a helical span at residues 147-167; sequence IIVLVWMYSLMWSLAPLLGWS. Over 168–198 the chain is Extracellular; it reads SYVPEGLRISCTWDYVTSTMSNRSYTMMLCC. A glycan (N-linked (GlcNAc...) asparagine) is linked at N189. Residues 199–219 form a helical membrane-spanning segment; that stretch reads CVFFIPLIVISHCYLFMFLAI. The Cytoplasmic portion of the chain corresponds to 220-250; the sequence is RSTGRNVQKLGSYGRQSFLSQSMKNEWKMAK. A helical transmembrane segment spans residues 251 to 271; sequence IAFVIIIVFVLSWSPYACVTL. Residues 272 to 286 are Extracellular-facing; it reads IAWAGHGKSLTPYSK. Residues 287-307 traverse the membrane as a helical segment; the sequence is TVPAVIAKASAIYNPIIYGII. K294 is modified (N6-(retinylidene)lysine). The Cytoplasmic segment spans residues 308 to 534; sequence HPKYRETIHK…LYEVVERFLS (227 aa). A disordered region spans residues 478-501; that stretch reads SNISETKEEHDNNSEEKSKRTEEE. Positions 482 to 499 are enriched in basic and acidic residues; that stretch reads ETKEEHDNNSEEKSKRTE.

The protein belongs to the G-protein coupled receptor 1 family. Opsin subfamily. In terms of tissue distribution, highest level in the iris, high level in the inner nuclear layer, possibly in horizontal cells, and lowest level in retinal pigment epithelium. Expressed in melanophore cells of the skin.

The protein localises to the cell membrane. Photoreceptor implicated in non-image-forming responses to light. May be able to isomerize covalently bound all-trans retinal back to 11-cis retinal. In Xenopus laevis (African clawed frog), this protein is Melanopsin-B.